We begin with the raw amino-acid sequence, 458 residues long: ATP synthase subunit beta (458 aa).

148–155 (GGAGVGKT) is an ATP binding site.

Belongs to the ATPase alpha/beta chains family. F-type ATPases have 2 components, CF(1) - the catalytic core - and CF(0) - the membrane proton channel. CF(1) has five subunits: alpha(3), beta(3), gamma(1), delta(1), epsilon(1). CF(0) has three main subunits: a(1), b(2) and c(9-12). The alpha and beta chains form an alternating ring which encloses part of the gamma chain. CF(1) is attached to CF(0) by a central stalk formed by the gamma and epsilon chains, while a peripheral stalk is formed by the delta and b chains.

Its subcellular location is the cell inner membrane. The catalysed reaction is ATP + H2O + 4 H(+)(in) = ADP + phosphate + 5 H(+)(out). Produces ATP from ADP in the presence of a proton gradient across the membrane. The catalytic sites are hosted primarily by the beta subunits. In Shewanella pealeana (strain ATCC 700345 / ANG-SQ1), this protein is ATP synthase subunit beta.